The chain runs to 508 residues: Photosystem II CP47 reaction center protein (508 aa).

6 consecutive transmembrane segments (helical) span residues 21–36 (SVHIMHTALVSGWAGS), 101–115 (IVFSGLCFLAAIWHW), 140–156 (GIHLFLSGVACFGFGAF), 203–218 (IAAGTLGILAGLFHLS), 237–252 (VLSSSIAAVFFAAFVV), and 457–472 (SFALLFFFGHIWHGSR).

This sequence belongs to the PsbB/PsbC family. PsbB subfamily. PSII is composed of 1 copy each of membrane proteins PsbA, PsbB, PsbC, PsbD, PsbE, PsbF, PsbH, PsbI, PsbJ, PsbK, PsbL, PsbM, PsbT, PsbX, PsbY, PsbZ, Psb30/Ycf12, at least 3 peripheral proteins of the oxygen-evolving complex and a large number of cofactors. It forms dimeric complexes. Binds multiple chlorophylls. PSII binds additional chlorophylls, carotenoids and specific lipids. is required as a cofactor.

The protein resides in the plastid. It localises to the chloroplast thylakoid membrane. Its function is as follows. One of the components of the core complex of photosystem II (PSII). It binds chlorophyll and helps catalyze the primary light-induced photochemical processes of PSII. PSII is a light-driven water:plastoquinone oxidoreductase, using light energy to abstract electrons from H(2)O, generating O(2) and a proton gradient subsequently used for ATP formation. This chain is Photosystem II CP47 reaction center protein, found in Lobularia maritima (Sweet alyssum).